The following is a 745-amino-acid chain: F-box only protein 30 (745 aa).

The TRAF-type zinc finger occupies 48–109 (EHRLLCPFER…SYADRKSYEN (62 aa)). Disordered stretches follow at residues 211-231 (NTSV…LEDQ) and 305-324 (GDSK…SDGT). Residues 222–231 (QNARESLEDQ) show a composition bias toward basic and acidic residues. A compositionally biased stretch (polar residues) spans 305–314 (GDSKQSNLTN). In terms of domain architecture, F-box spans 610–658 (NDHLSSLPFEVLQHIAGFLDGFSLCQLSCVSKLMRDVCGSLLQSRGMVI).

As to quaternary structure, part of a SCF (SKP1-cullin-F-box) protein ligase complex. Interacts with SKP1, CUL1 and RBX1/ROC1. Post-translationally, auto-ubiquitinated. May be neddylated. Neddylation may be required for E3 ligase activity.

The protein operates within protein modification; protein ubiquitination. Functionally, substrate-recognition component of the SCF (SKP1-CUL1-F-box protein)-type E3 ubiquitin ligase complex. Required for muscle atrophy following denervation. The polypeptide is F-box only protein 30 (FBXO30) (Homo sapiens (Human)).